A 316-amino-acid polypeptide reads, in one-letter code: Transaldolase (316 aa).

Lys-131 acts as the Schiff-base intermediate with substrate in catalysis.

This sequence belongs to the transaldolase family. Type 1 subfamily. In terms of assembly, homodimer.

It localises to the cytoplasm. It carries out the reaction D-sedoheptulose 7-phosphate + D-glyceraldehyde 3-phosphate = D-erythrose 4-phosphate + beta-D-fructose 6-phosphate. It participates in carbohydrate degradation; pentose phosphate pathway; D-glyceraldehyde 3-phosphate and beta-D-fructose 6-phosphate from D-ribose 5-phosphate and D-xylulose 5-phosphate (non-oxidative stage): step 2/3. Transaldolase is important for the balance of metabolites in the pentose-phosphate pathway. The chain is Transaldolase from Buchnera aphidicola subsp. Acyrthosiphon pisum (strain 5A).